A 113-amino-acid polypeptide reads, in one-letter code: Probable 4-amino-4-deoxy-L-arabinose-phosphoundecaprenol flippase subunit ArnE (113 aa).

The next 3 helical transmembrane spans lie at 40–60 (FGWL…WLLV), 64–84 (LPLG…TLLA), and 92–112 (VDRH…LMQG).

Belongs to the ArnE family. In terms of assembly, heterodimer of ArnE and ArnF.

It is found in the cell inner membrane. It functions in the pathway bacterial outer membrane biogenesis; lipopolysaccharide biosynthesis. Its function is as follows. Translocates 4-amino-4-deoxy-L-arabinose-phosphoundecaprenol (alpha-L-Ara4N-phosphoundecaprenol) from the cytoplasmic to the periplasmic side of the inner membrane. The sequence is that of Probable 4-amino-4-deoxy-L-arabinose-phosphoundecaprenol flippase subunit ArnE from Pectobacterium atrosepticum (strain SCRI 1043 / ATCC BAA-672) (Erwinia carotovora subsp. atroseptica).